Reading from the N-terminus, the 407-residue chain is Ribonuclease Z (407 aa).

The interval 1–308 is ribonuclease Z; sequence MEITFLGTSS…QDFLHYAIPR (308 aa). Zn(2+)-binding residues include His62, His64, Asp66, His67, His139, Asp210, and His268. The Proton acceptor role is filled by Asp66. The segment at 309–407 is unknown; it reads DGQICAEMPP…VDWSALNVLF (99 aa).

This sequence belongs to the RNase Z family. As to quaternary structure, homodimer. The cofactor is Zn(2+).

The catalysed reaction is Endonucleolytic cleavage of RNA, removing extra 3' nucleotides from tRNA precursor, generating 3' termini of tRNAs. A 3'-hydroxy group is left at the tRNA terminus and a 5'-phosphoryl group is left at the trailer molecule.. Its function is as follows. Zinc phosphodiesterase, which displays some tRNA 3'-processing endonuclease activity. Probably involved in tRNA maturation, by removing a 3'-trailer from precursor tRNA. The sequence is that of Ribonuclease Z (rnz) from Thermosynechococcus vestitus (strain NIES-2133 / IAM M-273 / BP-1).